The chain runs to 286 residues: 2-dehydro-3-deoxyphosphooctonate aldolase (286 aa).

The protein belongs to the KdsA family.

The protein localises to the cytoplasm. It catalyses the reaction D-arabinose 5-phosphate + phosphoenolpyruvate + H2O = 3-deoxy-alpha-D-manno-2-octulosonate-8-phosphate + phosphate. It functions in the pathway carbohydrate biosynthesis; 3-deoxy-D-manno-octulosonate biosynthesis; 3-deoxy-D-manno-octulosonate from D-ribulose 5-phosphate: step 2/3. It participates in bacterial outer membrane biogenesis; lipopolysaccharide biosynthesis. In Shewanella denitrificans (strain OS217 / ATCC BAA-1090 / DSM 15013), this protein is 2-dehydro-3-deoxyphosphooctonate aldolase.